Here is a 416-residue protein sequence, read N- to C-terminus: Alpha-1-antiproteinase (416 aa).

The N-terminal stretch at 1 to 24 (MALSITRGLLLLAALCCLAPTSLA) is a signal peptide. 4 N-linked (GlcNAc...) asparagine glycosylation sites follow: Asn-68, Asn-105, Asn-143, and Asn-269. The segment at 371–390 (GATFLEAIPMSLPPDVEFNR) is RCL. Ser-381 is subject to Phosphoserine.

Belongs to the serpin family. Interacts with CELA2A. Interacts with ERGIC3 and LMAN1/ERGIC53. Interacts with PRSS1/Trypsin. Plasma.

Its subcellular location is the secreted. Inhibits human leukocyte elastase, pig pancreatic elastase and bovine trypsin on a 1:1 molar basis. This chain is Alpha-1-antiproteinase, found in Ovis aries (Sheep).